A 326-amino-acid polypeptide reads, in one-letter code: Meiotically up-regulated gene 113 protein (326 aa).

It localises to the cytoplasm. In terms of biological role, has a role in meiosis. In Schizosaccharomyces pombe (strain 972 / ATCC 24843) (Fission yeast), this protein is Meiotically up-regulated gene 113 protein (mug113).